We begin with the raw amino-acid sequence, 218 residues long: MVAQNSRRELLAASLILTLALIRLTEANSEGDALHALRRSLSDPDNVVQSWDPTLVNPCTWFHVTCNQHHQVTRLDLGNSNLSGHLVPELGKLEHLQYLELYKNEIQGTIPSELGNLKSLISLDLYNNNLTGKIPSSLGKLKSLVFLRLNENRLTGPIPRELTVISSLKVVDVSGNDLCGTIPVEGPFEHIPMQNFENNLRLEGPELLGLASYDTNCT.

Positions 1-27 (MVAQNSRRELLAASLILTLALIRLTEA) are cleaved as a signal peptide. 5 LRR repeats span residues 69 to 93 (HHQV…LGKL), 94 to 117 (EHLQ…LGNL), 119 to 141 (SLIS…LGKL), 142 to 165 (KSLV…LTVI), and 167 to 190 (SLKV…PFEH).

Functionally, probably involved in plant defense response. The protein is Leucine-rich repeat protein 2 of Arabidopsis thaliana (Mouse-ear cress).